The sequence spans 337 residues: Ribosomal RNA small subunit methyltransferase H (337 aa).

S-adenosyl-L-methionine is bound by residues 33 to 35, Asp53, Asp101, and Gln108; that span reads AGH.

This sequence belongs to the methyltransferase superfamily. RsmH family.

The protein localises to the cytoplasm. It carries out the reaction cytidine(1402) in 16S rRNA + S-adenosyl-L-methionine = N(4)-methylcytidine(1402) in 16S rRNA + S-adenosyl-L-homocysteine + H(+). In terms of biological role, specifically methylates the N4 position of cytidine in position 1402 (C1402) of 16S rRNA. This Herpetosiphon aurantiacus (strain ATCC 23779 / DSM 785 / 114-95) protein is Ribosomal RNA small subunit methyltransferase H.